Consider the following 405-residue polypeptide: D-threonate kinase (405 aa).

Substrate contacts are provided by residues Asp12, Arg59, and 88 to 91; that span reads KVDS. ATP is bound by residues Ser243, 337–340, and Gly383; that span reads GGDG.

It belongs to the four-carbon acid sugar kinase family.

The catalysed reaction is D-threonate + ATP = 4-O-phospho-D-threonate + ADP + H(+). Its function is as follows. Catalyzes the ATP-dependent phosphorylation of D-threonate to D-threonate 4-phosphate. Can also phosphorylate 4-hydroxy-L-threonine, with lower efficiency. In Bordetella bronchiseptica (strain ATCC BAA-588 / NCTC 13252 / RB50) (Alcaligenes bronchisepticus), this protein is D-threonate kinase.